A 413-amino-acid chain; its full sequence is Serine/threonine transporter SstT (413 aa).

9 helical membrane-spanning segments follow: residues 21-41 (IGLLLGIIFALVSPSLESALG), 61-81 (SVAPILVFVLVIAAIANKKVG), 89-109 (IIYLYLIGTFLSALTAVFASF), 146-166 (ITALFNANFIGILAWAIGLGI), 189-209 (IVHFIISFAPIGVFGLVASTL), 224-244 (LAVLVGSMLFVAFVINPIIVF), 305-325 (MGGAAITITVLTLAAVFTLGI), 337-357 (LVASICACGASGVAGGSLLLI), and 363-383 (LFGISNDIAAQVIGVGFIIGV).

This sequence belongs to the dicarboxylate/amino acid:cation symporter (DAACS) (TC 2.A.23) family.

The protein resides in the cell inner membrane. It catalyses the reaction L-serine(in) + Na(+)(in) = L-serine(out) + Na(+)(out). The catalysed reaction is L-threonine(in) + Na(+)(in) = L-threonine(out) + Na(+)(out). Involved in the import of serine and threonine into the cell, with the concomitant import of sodium (symport system). The polypeptide is Serine/threonine transporter SstT (Mannheimia succiniciproducens (strain KCTC 0769BP / MBEL55E)).